Reading from the N-terminus, the 89-residue chain is UPF0175 protein APE_0276a (89 aa).

This sequence belongs to the UPF0175 family.

This chain is UPF0175 protein APE_0276a, found in Aeropyrum pernix (strain ATCC 700893 / DSM 11879 / JCM 9820 / NBRC 100138 / K1).